The following is a 633-amino-acid chain: tRNA uridine 5-carboxymethylaminomethyl modification enzyme MnmG (633 aa).

18 to 23 (GAGHAG) contributes to the FAD binding site. The disordered stretch occupies residues 208 to 232 (PRVNGNTIDFDKTEEQPGDKTPNHF). Residues 216 to 229 (DFDKTEEQPGDKTP) show a composition bias toward basic and acidic residues. 279–293 (GPRYCPSIEDKIVRF) contributes to the NAD(+) binding site.

It belongs to the MnmG family. In terms of assembly, homodimer. Heterotetramer of two MnmE and two MnmG subunits. It depends on FAD as a cofactor.

The protein resides in the cytoplasm. Functionally, NAD-binding protein involved in the addition of a carboxymethylaminomethyl (cmnm) group at the wobble position (U34) of certain tRNAs, forming tRNA-cmnm(5)s(2)U34. The sequence is that of tRNA uridine 5-carboxymethylaminomethyl modification enzyme MnmG from Lacticaseibacillus paracasei (strain ATCC 334 / BCRC 17002 / CCUG 31169 / CIP 107868 / KCTC 3260 / NRRL B-441) (Lactobacillus paracasei).